Consider the following 308-residue polypeptide: Low density lipoprotein receptor adapter protein 1 (308 aa).

Met1 is modified (N-acetylmethionine). Ser14 carries the post-translational modification Phosphoserine. Residues 41–195 (LLEGMVFSLK…QEGGDVPGTR (155 aa)) enclose the PID domain. The disordered stretch occupies residues 179–201 (EKREKANQEGGDVPGTRRDSTPS). Phosphoserine is present on residues Ser198 and Ser201. The Clathrin box motif lies at 211–215 (LLDLE). The segment at 248-275 (WELDDGLDEAFSRLAQSRTNPQVLDTGL) is AP-2 complex binding. The [DE]-X(1,2)-F-X-X-[FL]-X-X-X-R motif motif lies at 256-265 (EAFSRLAQSR). The segment at 288–308 (PTDWDKPDSSGIDQDDDVFTF) is disordered.

Interacts (via PID domain) with LDLR (via NPXY motif). Binds to soluble clathrin trimers. Interacts with AP2B1; the interaction mediates the association with the AP-2 complex. Interacts with VLDLR. Interacts with LRP2.

The protein localises to the cytoplasm. Functionally, adapter protein (clathrin-associated sorting protein (CLASP)) required for efficient endocytosis of the LDL receptor (LDLR) in polarized cells such as hepatocytes and lymphocytes, but not in non-polarized cells (fibroblasts). May be required for LDL binding and internalization but not for receptor clustering in coated pits. May facilitate the endocytosis of LDLR and LDLR-LDL complexes from coated pits by stabilizing the interaction between the receptor and the structural components of the pits. May also be involved in the internalization of other LDLR family members. Binds to phosphoinositides, which regulate clathrin bud assembly at the cell surface. Required for trafficking of LRP2 to the endocytic recycling compartment which is necessary for LRP2 proteolysis, releasing a tail fragment which translocates to the nucleus and mediates transcriptional repression. In Mus musculus (Mouse), this protein is Low density lipoprotein receptor adapter protein 1.